The following is a 305-amino-acid chain: Beta-lactamase (305 aa).

Positions 1-34 (MGTTGARPSRRAVLTAAAGAAVAGIPLGGSTAFA) form a signal peptide, tat-type signal. The active-site Acyl-ester intermediate is the Ser-82. 250–252 (KTG) is a binding site for substrate.

This sequence belongs to the class-A beta-lactamase family. Predicted to be exported by the Tat system. The position of the signal peptide cleavage has not been experimentally proven.

The enzyme catalyses a beta-lactam + H2O = a substituted beta-amino acid. The chain is Beta-lactamase from Streptomyces lavendulae.